The primary structure comprises 120 residues: UPF0344 protein lin2366 (120 aa).

4 helical membrane-spanning segments follow: residues 3-23 (GYVH…ALLI), 33-53 (MLQM…IMMV), 62-82 (ILAI…EMLL), and 92-112 (GMFL…GFYL).

Belongs to the UPF0344 family.

Its subcellular location is the cell membrane. This is UPF0344 protein lin2366 from Listeria innocua serovar 6a (strain ATCC BAA-680 / CLIP 11262).